The primary structure comprises 277 residues: MSLPLLAVKPRTLDQRVVSYEVPAEDDPVIYRLTDATDAAAVDALIWAAYRQIFSEHLILASYRQPFLESQLRNRAISVRDFIRGLGKSEVYREQVAAVNSNYRLVDISFKRFLGRPTYGQQEQIAWSIILATRGLEGFIDALVDSDEYQQNFGADIVPYQRRRRMARPFNLVNPRYSDYWRNKEISLSGRSYYQARYYASGPLDKQIVRGAIPANFLSMARSIVVPTLDTQRHVARATSSLVKVPNTAQERDLPPTPVKPVPVALPYRYLPSQPKV.

The region spanning 11–189 (RTLDQRVVSY…YWRNKEISLS (179 aa)) is the PBS-linker domain.

The protein belongs to the phycobilisome linker protein family. As to quaternary structure, the phycobilisome is a hemidiscoidal structure that is composed of two distinct substructures: a core complex and a number of rods radiating from the core.

The protein resides in the cellular thylakoid membrane. Functionally, rod-core linker protein required for attachment of phycocyanin to allophycocyanin in cores of phycobilisomes. Its function is as follows. Linker polypeptides determine the state of aggregation and the location of the disk-shaped phycobiliprotein units within the phycobilisome and modulate their spectroscopic properties in order to mediate a directed and optimal energy transfer. The protein is Phycobilisome rod-core linker polypeptide CpcG1 (cpcG1) of Thermosynechococcus vestitus (strain NIES-2133 / IAM M-273 / BP-1).